A 700-amino-acid polypeptide reads, in one-letter code: Constitutive coactivator of peroxisome proliferator-activated receptor gamma (700 aa).

Belongs to the constitutive coactivator of PPAR-gamma family. In terms of assembly, interacts with ESR1 and RXRA. Interacts with PPARG; in a ligand-independent manner.

Its subcellular location is the nucleus. Functionally, functions as a transactivator of PPARG and ESR1. Functions in adipogenesis through PPARG activation. This chain is Constitutive coactivator of peroxisome proliferator-activated receptor gamma (FAM120B), found in Bos taurus (Bovine).